The chain runs to 64 residues: Large ribosomal subunit protein bL35 (64 aa).

It belongs to the bacterial ribosomal protein bL35 family.

The protein is Large ribosomal subunit protein bL35 of Micrococcus luteus (strain ATCC 4698 / DSM 20030 / JCM 1464 / CCM 169 / CCUG 5858 / IAM 1056 / NBRC 3333 / NCIMB 9278 / NCTC 2665 / VKM Ac-2230) (Micrococcus lysodeikticus).